The chain runs to 460 residues: Hydroxymethylglutaryl-CoA synthase MYCGRDRAFT_54740 (460 aa).

Ala35 contacts (3S)-3-hydroxy-3-methylglutaryl-CoA. Glu86 (proton donor/acceptor) is an active-site residue. (3S)-3-hydroxy-3-methylglutaryl-CoA-binding residues include Cys120, Asn158, Thr162, Ser212, His262, Lys271, Asn339, and Ser373. Cys120 serves as the catalytic Acyl-thioester intermediate. Catalysis depends on His262, which acts as the Proton donor/acceptor.

It belongs to the thiolase-like superfamily. HMG-CoA synthase family.

It carries out the reaction acetoacetyl-CoA + acetyl-CoA + H2O = (3S)-3-hydroxy-3-methylglutaryl-CoA + CoA + H(+). It functions in the pathway siderophore biosynthesis. Hydroxymethylglutaryl-CoA synthase involved in the biosynthesis of a ferrichrome A-like siderophors which may contribute to organismal virulence. The first step of siderophore biosynthesis is performed by the HMG-CoA synthase (HMGS) MYCGRDRAFT_54740 which catalyzes the generation of HMG-CoA and CoA using acetoacetyl-CoA and acetyl-CoA as substrates. The enoyl-CoA isomerase/hydratase MYCGRDRAFT_76805 then catalyzes the conversion of HMG-CoA to methylglutaconyl-CoA. The acyltransferase MYCGRDRAFT_85486 then fuses methylglutaconyl-CoA with hydroxyornithine to yield methylglutaconyl hydroxyornithine. Methylglutaconyl hydroxyornithine is then available for use by the nonribosomal peptide synthetase NRPS2 to generate the ferrichrome A-like siderophore. The chain is Hydroxymethylglutaryl-CoA synthase MYCGRDRAFT_54740 (ERG13) from Zymoseptoria tritici (strain CBS 115943 / IPO323) (Speckled leaf blotch fungus).